The following is a 450-amino-acid chain: Na(+)/H(+) antiporter NhaA 2 (450 aa).

12 helical membrane passes run V43 to W63, L86 to L106, A124 to V144, G155 to S175, F185 to Y205, E208 to V228, S234 to V254, V258 to P278, V299 to L319, P326 to T346, W364 to I384, and F398 to L418.

Belongs to the NhaA Na(+)/H(+) (TC 2.A.33) antiporter family.

The protein resides in the cell membrane. The enzyme catalyses Na(+)(in) + 2 H(+)(out) = Na(+)(out) + 2 H(+)(in). Na(+)/H(+) antiporter that extrudes sodium in exchange for external protons. This chain is Na(+)/H(+) antiporter NhaA 2, found in Mycobacterium sp. (strain JLS).